A 362-amino-acid chain; its full sequence is Isopentenyl-diphosphate delta-isomerase (362 aa).

A substrate-binding site is contributed by 5–6; that stretch reads RK. FMN is bound by residues 63-65, serine 93, and asparagine 122; that span reads AMT. Glutamine 152 contacts substrate. Glutamate 153 lines the Mg(2+) pocket. Residues lysine 184, threonine 214, 259–261, and 280–281 contribute to the FMN site; these read GIR and AG.

Belongs to the IPP isomerase type 2 family. In terms of assembly, homooctamer. Dimer of tetramers. FMN is required as a cofactor. NADPH serves as cofactor. Requires Mg(2+) as cofactor.

Its subcellular location is the cytoplasm. It catalyses the reaction isopentenyl diphosphate = dimethylallyl diphosphate. Involved in the biosynthesis of isoprenoids. Catalyzes the 1,3-allylic rearrangement of the homoallylic substrate isopentenyl (IPP) to its allylic isomer, dimethylallyl diphosphate (DMAPP). This is Isopentenyl-diphosphate delta-isomerase from Nocardia farcinica (strain IFM 10152).